The primary structure comprises 244 residues: Putative nucleosome assembly protein C36B7.08c (244 aa).

The disordered stretch occupies residues 199-244; the sequence is EAMTEEASDEDESVDLEEDEEEEDEEDEEGDEEKQEPPSKKSKKSN. The span at 201–232 shows a compositional bias: acidic residues; sequence MTEEASDEDESVDLEEDEEEEDEEDEEGDEEK. At serine 211 the chain carries Phosphoserine.

This sequence belongs to the nucleosome assembly protein (NAP) family.

Its subcellular location is the nucleus. This is Putative nucleosome assembly protein C36B7.08c from Schizosaccharomyces pombe (strain 972 / ATCC 24843) (Fission yeast).